Consider the following 373-residue polypeptide: Peptide chain release factor 1-like, mitochondrial (373 aa).

The transit peptide at 1–13 (MRSGFLRSARRLW) directs the protein to the mitochondrion. Positions 56-111 (QLAAAARLLNEKERELRDTESLLHDENEDLKKLAESEIALCQKEIAELKHRIISLL) form a coiled coil. The segment at 229 to 293 (PKDLRIDTKR…LRARLYSMRL (65 aa)) is GGQ domain. The GGQ motif lies at 243–245 (GGQ). Residue Q245 is modified to N5-methylglutamine.

Belongs to the prokaryotic/mitochondrial release factor family. Methylation of glutamine in the GGQ triplet by HEMK1 is conserved from bacteria to mammals.

Its subcellular location is the mitochondrion. Functionally, mitochondrial peptide chain release factor that directs the termination of translation in response to the peptide chain termination codons UAA and UAG. The sequence is that of Peptide chain release factor 1-like, mitochondrial (Mtrf1l) from Rattus norvegicus (Rat).